The chain runs to 485 residues: MENKIVASTKEEFNTWYKQFAEKHKLNNKYTESASFCAEIPQLDTYKYKMELASTDNERDAIYSSALIEATRFCAPIMECAWASCTGTVKRGLEWFDKNKDSDTVKVWDANYQKLRTETPPAEALLAYQKAALNWRKDVGFSIGEYTSILKKAVAAEYKVPGTVINNIKEMLSDMIRRRNRIINGGSDDAPKRGPVGREHLDWCREFASGKFLNAFNPPWGEINKAGKSGYPLLATGLAKLVELEGKDVMDKAKASIAQLEGWVKENKDQVDQDKAEDLLKGVRESYKTALALAKLSNAFRAQGAQIDTVFSSYYWPWKAGVTPVTFPSVSQFLFELGKNPKGQKKMQKALINTPLKWGKRLIELFADNDFTENRIYMHPCVLTSGRMSELGISFGAVPVTSPDDAAQGSGHTKAVLNYKTKTEVGNPCACIISSLFEIQKAGYDIESMDIVASEHLLHQSLVGKRSPFQNAYLIKGNATNINII.

The short motif at D269–D272 is the DQVD element.

Belongs to the nairovirus nucleocapsid protein family. Probable homooligomer; forms a double superhelical polymer. Monomer. Mn(2+) serves as cofactor. Cleaved at the DQVD motif by host CASP3/caspase 3 in mammalian cells at 48 hours postinfection giving rise to cleavage products of about 30 kDa and 22 kDa that remain associated. Only the monomeric form is cleaved. Little or no cleavage in tick cells. Caspase cleavage reduces the viral polymerase activity. Caspase cleavage is not required for productive infection in mammalian or tick host cells.

The protein localises to the virion. Binds dsRNA and ssRNA and probably participates in the packaging of viral genome. In the dsRNA binding mode, the nucleocapsid protein specifically binds to the vRNA panhandle secondary structure formed at the termini of viral genome. Does not discriminate between viral and nonviral RNAs through ssRNA binding mode. Displays dsDNA endonuclease activity that is sequence non-specific. The protein is Nucleoprotein (N) of Hazara virus (isolate JC280).